The chain runs to 466 residues: Soluble pyridine nucleotide transhydrogenase (466 aa).

36–45 (EKESSVGGGC) contributes to the FAD binding site.

It belongs to the class-I pyridine nucleotide-disulfide oxidoreductase family. Requires FAD as cofactor.

Its subcellular location is the cytoplasm. The catalysed reaction is NAD(+) + NADPH = NADH + NADP(+). Conversion of NADPH, generated by peripheral catabolic pathways, to NADH, which can enter the respiratory chain for energy generation. The protein is Soluble pyridine nucleotide transhydrogenase of Vibrio vulnificus (strain CMCP6).